Here is a 368-residue protein sequence, read N- to C-terminus: 3-dehydroquinate synthase (368 aa).

Residues glycine 110–aspartate 114, threonine 134–serine 135, lysine 147, and lysine 156 each bind NAD(+). Zn(2+)-binding residues include glutamate 189, histidine 254, and histidine 271.

Belongs to the sugar phosphate cyclases superfamily. Dehydroquinate synthase family. It depends on NAD(+) as a cofactor. Co(2+) is required as a cofactor. Zn(2+) serves as cofactor.

It localises to the cytoplasm. It catalyses the reaction 7-phospho-2-dehydro-3-deoxy-D-arabino-heptonate = 3-dehydroquinate + phosphate. Its pathway is metabolic intermediate biosynthesis; chorismate biosynthesis; chorismate from D-erythrose 4-phosphate and phosphoenolpyruvate: step 2/7. Its function is as follows. Catalyzes the conversion of 3-deoxy-D-arabino-heptulosonate 7-phosphate (DAHP) to dehydroquinate (DHQ). The sequence is that of 3-dehydroquinate synthase from Thermosynechococcus vestitus (strain NIES-2133 / IAM M-273 / BP-1).